A 207-amino-acid polypeptide reads, in one-letter code: Uracil phosphoribosyltransferase (207 aa).

5-phospho-alpha-D-ribose 1-diphosphate-binding positions include arginine 77, arginine 102, and 129–137 (DPMVATGGS). Uracil-binding positions include isoleucine 192 and 197 to 199 (GDA). Aspartate 198 contacts 5-phospho-alpha-D-ribose 1-diphosphate.

Belongs to the UPRTase family. It depends on Mg(2+) as a cofactor.

The catalysed reaction is UMP + diphosphate = 5-phospho-alpha-D-ribose 1-diphosphate + uracil. It participates in pyrimidine metabolism; UMP biosynthesis via salvage pathway; UMP from uracil: step 1/1. Its activity is regulated as follows. Allosterically activated by GTP. Catalyzes the conversion of uracil and 5-phospho-alpha-D-ribose 1-diphosphate (PRPP) to UMP and diphosphate. The sequence is that of Uracil phosphoribosyltransferase from Mycobacterium bovis (strain ATCC BAA-935 / AF2122/97).